A 238-amino-acid polypeptide reads, in one-letter code: Orotidine 5'-phosphate decarboxylase (238 aa).

Residues D10, K32, 59–68, T122, R184, Q193, G213, and R214 contribute to the substrate site; that span reads DLKLHDIPNT. The Proton donor role is filled by K61.

The protein belongs to the OMP decarboxylase family. Type 1 subfamily. Homodimer.

It catalyses the reaction orotidine 5'-phosphate + H(+) = UMP + CO2. It participates in pyrimidine metabolism; UMP biosynthesis via de novo pathway; UMP from orotate: step 2/2. In terms of biological role, catalyzes the decarboxylation of orotidine 5'-monophosphate (OMP) to uridine 5'-monophosphate (UMP). This chain is Orotidine 5'-phosphate decarboxylase, found in Bacillus cereus (strain AH820).